A 222-amino-acid polypeptide reads, in one-letter code: Ethylene-inducing xylanase 2 (222 aa).

Residues 1 to 19 (MITFSSLLVTFSAISTSLA) form the signal peptide. One can recognise a GH11 domain in the interval 36-222 (QRNESSLVRR…GEGAATQTVS (187 aa)). Residues asparagine 38 and asparagine 94 are each glycosylated (N-linked (GlcNAc...) asparagine). The active-site Nucleophile is glutamate 120. The active-site Proton donor is the glutamate 209.

This sequence belongs to the glycosyl hydrolase 11 (cellulase G) family.

It catalyses the reaction Endohydrolysis of (1-&gt;4)-beta-D-xylosidic linkages in xylans.. The protein operates within glycan degradation; xylan degradation. Functionally, endo-1,4-beta-xylanase involved in the hydrolysis of xylan, a major structural heterogeneous polysaccharide found in plant biomass representing the second most abundant polysaccharide in the biosphere, after cellulose. May act as an elicitor of plant defense responses in certain plants but does not exhibit any cell death when transiently expressed in N.benthamiana. The protein is Ethylene-inducing xylanase 2 of Botryotinia fuckeliana (strain B05.10) (Noble rot fungus).